Here is a 534-residue protein sequence, read N- to C-terminus: (R)-citramalate synthase (534 aa).

In terms of domain architecture, Pyruvate carboxyltransferase spans 11–274 (FHVFDTTLRD…KQVLPEGRLR (264 aa)).

The protein belongs to the alpha-IPM synthase/homocitrate synthase family.

It carries out the reaction pyruvate + acetyl-CoA + H2O = (3R)-citramalate + CoA + H(+). The protein operates within amino-acid biosynthesis; L-isoleucine biosynthesis; 2-oxobutanoate from pyruvate: step 1/3. Functionally, catalyzes the condensation of pyruvate and acetyl-coenzyme A to form (R)-citramalate. In Streptomyces coelicolor (strain ATCC BAA-471 / A3(2) / M145), this protein is (R)-citramalate synthase.